The following is a 166-amino-acid chain: Lipoprotein signal peptidase (166 aa).

Helical transmembrane passes span 12 to 32 (WLWL…LILQ), 70 to 90 (WFFA…MYRA), and 102 to 122 (ALII…GFVV). Residues Asp123 and Asp141 contribute to the active site. A helical membrane pass occupies residues 142–162 (SAICFGAAMIVLEGFLPNAAA).

It belongs to the peptidase A8 family.

It localises to the cell inner membrane. It carries out the reaction Release of signal peptides from bacterial membrane prolipoproteins. Hydrolyzes -Xaa-Yaa-Zaa-|-(S,diacylglyceryl)Cys-, in which Xaa is hydrophobic (preferably Leu), and Yaa (Ala or Ser) and Zaa (Gly or Ala) have small, neutral side chains.. It functions in the pathway protein modification; lipoprotein biosynthesis (signal peptide cleavage). Its function is as follows. This protein specifically catalyzes the removal of signal peptides from prolipoproteins. The chain is Lipoprotein signal peptidase from Enterobacter sp. (strain 638).